We begin with the raw amino-acid sequence, 139 residues long: Stress-related protein 1 (139 aa).

The segment covering 1–12 (MTSESSTPTGST) has biased composition (polar residues). The tract at residues 1–86 (MTSESSTPTG…AERPGSATTP (86 aa)) is disordered. Composition is skewed to low complexity over residues 14-53 (ALPA…SLVV) and 60-74 (SPVV…TRPR). Serine 60 bears the Phosphoserine mark.

In terms of tissue distribution, embryo.

Its function is as follows. Involved in drought, heat, cold, and/or salt tolerance. The polypeptide is Stress-related protein 1 (SRP1) (Zea mays (Maize)).